The sequence spans 238 residues: 2-C-methyl-D-erythritol 4-phosphate cytidylyltransferase (238 aa).

This sequence belongs to the IspD/TarI cytidylyltransferase family. IspD subfamily.

The catalysed reaction is 2-C-methyl-D-erythritol 4-phosphate + CTP + H(+) = 4-CDP-2-C-methyl-D-erythritol + diphosphate. The protein operates within isoprenoid biosynthesis; isopentenyl diphosphate biosynthesis via DXP pathway; isopentenyl diphosphate from 1-deoxy-D-xylulose 5-phosphate: step 2/6. Its function is as follows. Catalyzes the formation of 4-diphosphocytidyl-2-C-methyl-D-erythritol from CTP and 2-C-methyl-D-erythritol 4-phosphate (MEP). The protein is 2-C-methyl-D-erythritol 4-phosphate cytidylyltransferase of Aliivibrio fischeri (strain ATCC 700601 / ES114) (Vibrio fischeri).